The chain runs to 93 residues: UPF0521 protein B (93 aa).

The stretch at 2–58 (SLKEVITSLKNDFHSINKEIDSMKENNEKQEEKIFQEIKKLKLEMELLRKDNLSFKT) forms a coiled coil.

This sequence belongs to the UPF0521 family.

The chain is UPF0521 protein B from Dictyostelium discoideum (Social amoeba).